The chain runs to 398 residues: Transcription factor kk1f (398 aa).

The interval 1–28 (MTFVETVAVPDNEERPSAGHNRPVADST) is disordered. A bZIP domain is found at 31-62 (PNAREMKVQNRVAQRTHHRRLKTKLEVLRERL). The segment at 34 to 50 (REMKVQNRVAQRTHHRR) is basic motif. Positions 51 to 58 (LKTKLEVL) are leucine-zipper.

Belongs to the bZIP family.

The protein localises to the nucleus. It functions in the pathway secondary metabolite biosynthesis. Its function is as follows. Transcription factor; part of the gene cluster that mediates the biosynthesis of KK-1, a novel cyclic depsipeptide with 10 residues which is a promising active compound with high activity against many plant pathogens, especially Botrytis cinerea. Positively regulates the expression of all the genes from the KK-1 biosynthesis gene cluster. This is Transcription factor kk1f from Curvularia clavata.